We begin with the raw amino-acid sequence, 469 residues long: Sulfate adenylyltransferase subunit 1 (469 aa).

The 203-residue stretch at 22-224 (KDLMRFITCG…NMTWYPGSPL (203 aa)) folds into the tr-type G domain. The tract at residues 31–38 (GSVDDGKS) is G1. 31 to 38 (GSVDDGKS) contributes to the GTP binding site. Residues 89-93 (GITID) are G2. The interval 110–113 (DTPG) is G3. Residues 110–114 (DTPGH) and 165–168 (NKMD) contribute to the GTP site. The tract at residues 165–168 (NKMD) is G4. The G5 stretch occupies residues 202–204 (SAL).

The protein belongs to the TRAFAC class translation factor GTPase superfamily. Classic translation factor GTPase family. CysN/NodQ subfamily. In terms of assembly, heterodimer composed of CysD, the smaller subunit, and CysN.

It catalyses the reaction sulfate + ATP + H(+) = adenosine 5'-phosphosulfate + diphosphate. It participates in sulfur metabolism; hydrogen sulfide biosynthesis; sulfite from sulfate: step 1/3. Functionally, with CysD forms the ATP sulfurylase (ATPS) that catalyzes the adenylation of sulfate producing adenosine 5'-phosphosulfate (APS) and diphosphate, the first enzymatic step in sulfur assimilation pathway. APS synthesis involves the formation of a high-energy phosphoric-sulfuric acid anhydride bond driven by GTP hydrolysis by CysN coupled to ATP hydrolysis by CysD. This chain is Sulfate adenylyltransferase subunit 1, found in Psychromonas ingrahamii (strain DSM 17664 / CCUG 51855 / 37).